Reading from the N-terminus, the 91-residue chain is MNLIIWPTYLDSRKSRSEGRRVPLEYAVESPTASEILRAARKLQLEASMESDRAYPPSWWESSGRVVVEYNGKKSELLPKIARLVRSSRKR.

This sequence belongs to the SRP19 family. Part of the signal recognition particle protein translocation system, which is composed of SRP and FtsY. Archaeal SRP consists of a 7S RNA molecule of 300 nucleotides and two protein subunits: SRP54 and SRP19.

Its subcellular location is the cytoplasm. Functionally, involved in targeting and insertion of nascent membrane proteins into the cytoplasmic membrane. Binds directly to 7S RNA and mediates binding of the 54 kDa subunit of the SRP. This is Signal recognition particle 19 kDa protein from Methanothermobacter thermautotrophicus (strain ATCC 29096 / DSM 1053 / JCM 10044 / NBRC 100330 / Delta H) (Methanobacterium thermoautotrophicum).